The chain runs to 468 residues: Peroxisome proliferator-activated receptor alpha (468 aa).

The segment at residues 99-173 (NIECRICGDK…VGMSHNAIRF (75 aa)) is a DNA-binding region (nuclear receptor). 2 NR C4-type zinc fingers span residues 102 to 122 (CRICGDKASGYHYGVHACEGC) and 139 to 161 (CDRSCKIQKKNRNKCQYCRFHKC). The 228-residue stretch at 239–466 (FVIHDMETLC…HPLLQEIYRD (228 aa)) folds into the NR LBD domain. Residues 304–433 (DQVTLLKYGV…PKLLQKMVDL (130 aa)) are required for heterodimerization with RXRA.

Belongs to the nuclear hormone receptor family. NR1 subfamily. As to quaternary structure, heterodimer; with RXRA. This heterodimerization is required for DNA binding and transactivation activity. Interacts with NCOA3 coactivator. Interacts with CITED2; the interaction stimulates its transcriptional activity. Also interacts with PPARBP in vitro. Interacts with AKAP13, LPIN1, PRDM16 and coactivator NCOA6. Interacts with ASXL1 and ASXL2. Interacts with PER2. Interacts with SIRT1; the interaction seems to be modulated by NAD(+) levels. Interacts with CRY1 and CRY2. In hepatocytes, interacts with PAQR3 and HUWE1; the interactions promote PPARA poylubiquitination and HUWE1-mediated degradation. Ubiquitinated by E3 ubiquitin-protein ligase HUWE1; leading to proteasomal degradation. Post-translationally, phosphorylated. As to expression, highly expressed in liver, kidney and heart. Very weakly expressed in brain and testis.

The protein localises to the nucleus. Ligand-activated transcription factor. Key regulator of lipid metabolism. Activated by the endogenous ligand 1-palmitoyl-2-oleoyl-sn-glycerol-3-phosphocholine (16:0/18:1-GPC). Activated by oleylethanolamide, a naturally occurring lipid that regulates satiety. Receptor for peroxisome proliferators such as hypolipidemic drugs and fatty acids. Regulates the peroxisomal beta-oxidation pathway of fatty acids. Functions as a transcription activator for the ACOX1 and P450 genes. Transactivation activity requires heterodimerization with RXRA and is antagonized by NR2C2. May be required for the propagation of clock information to metabolic pathways regulated by PER2. The polypeptide is Peroxisome proliferator-activated receptor alpha (Ppara) (Mus musculus (Mouse)).